Reading from the N-terminus, the 448-residue chain is Ribosomal protein uS12 methylthiotransferase RimO (448 aa).

Residues 7 to 123 (EKVSLVSLGC…IAEIIAEKEG (117 aa)) enclose the MTTase N-terminal domain. Residues cysteine 16, cysteine 52, cysteine 86, cysteine 161, cysteine 165, and cysteine 168 each contribute to the [4Fe-4S] cluster site. In terms of domain architecture, Radical SAM core spans 147-377 (SSPYYTAYLK…MRTQARVSFK (231 aa)). The TRAM domain occupies 380-448 (RSLVDTEELV…DYDLIGEIVP (69 aa)).

Belongs to the methylthiotransferase family. RimO subfamily. The cofactor is [4Fe-4S] cluster.

The protein resides in the cytoplasm. The enzyme catalyses L-aspartate(89)-[ribosomal protein uS12]-hydrogen + (sulfur carrier)-SH + AH2 + 2 S-adenosyl-L-methionine = 3-methylsulfanyl-L-aspartate(89)-[ribosomal protein uS12]-hydrogen + (sulfur carrier)-H + 5'-deoxyadenosine + L-methionine + A + S-adenosyl-L-homocysteine + 2 H(+). Catalyzes the methylthiolation of an aspartic acid residue of ribosomal protein uS12. The polypeptide is Ribosomal protein uS12 methylthiotransferase RimO (Geotalea uraniireducens (strain Rf4) (Geobacter uraniireducens)).